The primary structure comprises 90 residues: Cell division protein CrgA (90 aa).

A disordered region spans residues 1–25; the sequence is MPKARVTKNETAPVSSNPSANRTPV. The segment covering 9 to 22 has biased composition (polar residues); it reads NETAPVSSNPSANR. 2 consecutive transmembrane segments (helical) span residues 38 to 58 and 67 to 87; these read VIMF…YLVG and LGAW…LMTM.

This sequence belongs to the CrgA family.

The protein localises to the cell membrane. Involved in cell division. The protein is Cell division protein CrgA of Corynebacterium glutamicum (strain R).